A 444-amino-acid polypeptide reads, in one-letter code: Deoxyguanosinetriphosphate triphosphohydrolase-like protein (444 aa).

The 192-residue stretch at 59 to 250 (RLTHSLEVSQ…MELADDIAYA (192 aa)) folds into the HD domain.

The protein belongs to the dGTPase family. Type 2 subfamily.

This is Deoxyguanosinetriphosphate triphosphohydrolase-like protein from Shewanella halifaxensis (strain HAW-EB4).